Consider the following 552-residue polypeptide: Small ribosomal subunit protein bS1 (552 aa).

S1 motif domains follow at residues 31 to 101 (TIKE…ISQQ), 116 to 179 (NAII…ISRK), 200 to 268 (TEPV…LSIK), 285 to 355 (GYAI…VSLK), 372 to 440 (GDIV…LSAK), and 457 to 521 (DSVI…ASVH).

This sequence belongs to the bacterial ribosomal protein bS1 family.

In terms of biological role, binds mRNA; thus facilitating recognition of the initiation point. It is needed to translate mRNA with a short Shine-Dalgarno (SD) purine-rich sequence. The protein is Small ribosomal subunit protein bS1 (rpsA) of Helicobacter pylori (strain J99 / ATCC 700824) (Campylobacter pylori J99).